Here is a 384-residue protein sequence, read N- to C-terminus: MVPNANSNTVSLQSPNAIPPRTSSTGYITPFPPAKSVLRPVPESDWLGQNNTRNRSSSTTAIPLTGMHATGPQDPARYETEDLNYTSRKTWSEQKEKVLVGPFEYLFAHPGKDFRTLMVNSFNAWLEVPQESLDVITKVVGMLHTASLLVDDVEDNSLLRRGLPVAHSIFGTAQTINSANYVYFCALQELQKLKNPEAINVYTEELLNLHRGQGMDLFWRDTLTCPTEEEYLEMVGNKTGGLFRLAIKLMQAESGTPIDCVPLVNILGIIFQIQDDYRNLSSPEYGQNKGLCEDLTEGKFSFLIIHSIRSNPSNLQLLNILKQKTTDDEVKRYAVKYMEGTGSFEYTQKVISILVDRARKMTDELDNGRGKSVGIHKILDKLVV.

2 disordered regions span residues 1 to 25 (MVPNANSNTVSLQSPNAIPPRTSST) and 39 to 78 (RPVPESDWLGQNNTRNRSSSTTAIPLTGMHATGPQDPARY). A compositionally biased stretch (polar residues) spans 47–62 (LGQNNTRNRSSSTTAI). Isopentenyl diphosphate contacts are provided by K112, R115, and H144. 2 residues coordinate Mg(2+): D151 and D155. Residue R160 participates in dimethylallyl diphosphate binding. R161 contacts isopentenyl diphosphate. The dimethylallyl diphosphate site is built by K238, T239, and Q272. D275 contributes to the Mg(2+) binding site. Residues N279, K289, and K299 each contribute to the dimethylallyl diphosphate site.

Belongs to the FPP/GGPP synthase family. It depends on Mg(2+) as a cofactor.

The catalysed reaction is isopentenyl diphosphate + dimethylallyl diphosphate = (2E)-geranyl diphosphate + diphosphate. The enzyme catalyses isopentenyl diphosphate + (2E)-geranyl diphosphate = (2E,6E)-farnesyl diphosphate + diphosphate. It catalyses the reaction isopentenyl diphosphate + (2E,6E)-farnesyl diphosphate = (2E,6E,10E)-geranylgeranyl diphosphate + diphosphate. It functions in the pathway secondary metabolite biosynthesis. Functionally, catalyzes the trans-addition of the 3 molecules of isopentenyl diphosphate (IPP) onto dimethylallyl diphosphate (DMAPP) to form geranylgeranyl pyrophosphate (GGPP). GGPP is a precursor for the biosynthesis of many secondary metabolites, including the indole diterpenes nodulisporic acids (NA). This is Geranylgeranyl pyrophosphate synthase from Hypoxylon pulicicidum.